A 29-amino-acid chain; its full sequence is U1-pseudomyrmecitoxin-Pt1 subunit SS1 (29 aa).

Belongs to the myrmexin family. In terms of assembly, heterodimer composed of subunit SS1 and subunit LS1 (U1-PSDTX-Pt1b), and heterodimer composed of subunit SS1 and LS2 (U1-PSDTX-Pt1a); disulfide-linked. Expressed by the venom gland.

It localises to the secreted. Functionally, this heterodimer may have anti-inflammatory properties, since the myrmexin complex (composed of 6 SS-LS heterodimers) inhibits carrageenin-induced edema in a dose-dependent manner (after subcutaneous injection into rats). The protein is U1-pseudomyrmecitoxin-Pt1 subunit SS1 of Pseudomyrmex triplarinus (Ant).